Consider the following 159-residue polypeptide: Cyclin-dependent kinase inhibitor 1 (159 aa).

Position 2 is an N-acetylserine (S2). S2 is covalently cross-linked (Glycyl serine ester (Ser-Gly) (interchain with G-Cter in ubiquitin)). The C4-type zinc-finger motif lies at 12–40 (HRSKVCRCLFGPVDSEQLRRDCDALMAGC). Positions 17–24 (CRCLFGPV) are required for binding cyclins. The tract at residues 53 to 58 (VTETPL) is required for binding CDKs. Position 78 is a phosphoserine; by NUAK1 (S78). Positions 78–106 (SPGSRSRDDLGGDKRPSTSSALLQGPAPE) are disordered. The segment covering 82-93 (RSRDDLGGDKRP) has biased composition (basic and acidic residues). At S112 the chain carries Phosphoserine; by GSK3-beta. The interval 118–142 (VSERPEDSPGGPGTSQGRKRRQTSL) is disordered. S125 is modified (phosphoserine). The PIP-box K+4 motif signature appears at 135–159 (RKRRQTSLTDFYHSKRRLVFCKRKP). T140 bears the Phosphothreonine; by PKA, PKB/AKT1, PIM1 and PIM2 mark. S141 is subject to Phosphoserine; by NUAK1. The interval 147-159 (HSKRRLVFCKRKP) is interaction with TRIM39.

The protein belongs to the CDI family. As to quaternary structure, interacts with HDAC1; the interaction is prevented by competitive binding of C10orf90/FATS to HDAC1 facilitating acetylation and protein stabilization of CDKN1A/p21. Interacts with MKRN1. Interacts with PSMA3. Interacts with PCNA. Component of the ternary complex, cyclin D-CDK4-CDKN1A. Interacts (via its N-terminal domain) with CDK4; the interaction promotes the assembly of the cyclin D-CDK4 complex, its nuclear translocation and promotes the cyclin D-dependent enzyme activity of CDK4. Binding to CDK2 leads to CDK2/cyclin E inactivation at the G1-S phase DNA damage checkpoint, thereby arresting cells at the G1-S transition during DNA repair. Interacts with PIM1. Interacts with STK11. Interacts with NUAK1. Interacts with DTL and TRIM39. Interacts with PKP3; the interaction sequesters CDKN1A to the cytoplasm thereby repressing its role as an inhibitor of CDK4- and CDK6-driven RB1 phosphorylation. Post-translationally, phosphorylation of Thr-140 or Ser-141 impairs binding to PCNA. Phosphorylation at Ser-112 by GSK3-beta enhances ubiquitination by the DCX(DTL) complex. Phosphorylation of Thr-140 by PIM2 enhances its stability and inhibits cell proliferation. Phosphorylation of Thr-140 by PIM1 results in the relocation of CDKN1A to the cytoplasm and enhanced CDKN1A protein stability. UV radiation-induced phosphorylation at Ser-78 and Ser-141 by NUAK1 leads to its degradation. Ubiquitinated by MKRN1; leading to polyubiquitination and 26S proteasome-dependent degradation. Ubiquitinated by the DCX(DTL) complex, also named CRL4(CDT2) complex, leading to its degradation during S phase or following UV irradiation. Ubiquitination by the DCX(DTL) complex is essential to control replication licensing and is PCNA-dependent: interacts with PCNA via its PIP-box, while the presence of the containing the 'K+4' motif in the PIP box, recruit the DCX(DTL) complex, leading to its degradation. Ubiquitination at Ser-2 leads to degradation by the proteasome pathway. Ubiquitinated by RNF114; leading to proteasomal degradation. In terms of processing, acetylation leads to protein stability. Acetylated in vitro on Lys-136, Lys-149, Lys-156 and Lys-158. Deacetylation by HDAC1 is prevented by competitive binding of C10orf90/FATS to HDAC1. As to expression, expressed in keratinocytes (at protein level).

It localises to the cytoplasm. The protein localises to the nucleus. Its function is as follows. May be involved in p53/TP53 mediated inhibition of cellular proliferation in response to DNA damage. Binds to and inhibits cyclin-dependent kinase activity, preventing phosphorylation of critical cyclin-dependent kinase substrates and blocking cell cycle progression. Functions in the nuclear localization and assembly of cyclin D-CDK4 complex and promotes its kinase activity towards RB1. At higher stoichiometric ratios, inhibits the kinase activity of the cyclin D-CDK4 complex. Inhibits DNA synthesis by DNA polymerase delta by competing with POLD3 for PCNA binding. Plays an important role in controlling cell cycle progression and DNA damage-induced G2 arrest. Functionally, plays an important role in controlling cell cycle progression and DNA damage-induced G2 arrest. Involved in p53/TP53 mediated inhibition of cellular proliferation in response to DNA damage. Also involved in p53-independent DNA damage-induced G2 arrest mediated by CREB3L1 in astrocytes and osteoblasts. Binds to and inhibits cyclin-dependent kinase activity, preventing phosphorylation of critical cyclin-dependent kinase substrates and blocking cell cycle progression. Functions in the nuclear localization and assembly of cyclin D-CDK4 complex and promotes its kinase activity towards RB1. At higher stoichiometric ratios, inhibits the kinase activity of the cyclin D-CDK4 complex. Inhibits DNA synthesis by DNA polymerase delta by competing with POLD3 for PCNA binding. Negatively regulates the CDK4- and CDK6-driven phosphorylation of RB1 in keratinocytes, thereby resulting in the release of E2F1 and subsequent transcription of E2F1-driven G1/S phase promoting genes. The chain is Cyclin-dependent kinase inhibitor 1 (Cdkn1a) from Mus musculus (Mouse).